Reading from the N-terminus, the 123-residue chain is Chaperone protein SycN (123 aa).

As to quaternary structure, interacts with YscB to form a complex which specifically binds to YopN.

It localises to the cytoplasm. It is found in the cell inner membrane. Its function is as follows. Functions as a specific chaperone for YopN. It could facilitate the secretion and the subsequent translocation of YopN. This chain is Chaperone protein SycN (sycN), found in Yersinia enterocolitica.